Reading from the N-terminus, the 509-residue chain is Maturase K (509 aa).

This sequence belongs to the intron maturase 2 family. MatK subfamily.

It is found in the plastid. Its subcellular location is the chloroplast. Its function is as follows. Usually encoded in the trnK tRNA gene intron. Probably assists in splicing its own and other chloroplast group II introns. This chain is Maturase K, found in Vatairea macrocarpa.